Consider the following 218-residue polypeptide: YlmG homolog protein 1-2, chloroplastic (218 aa).

A chloroplast-targeting transit peptide spans 1 to 83; sequence MASFTTNSLA…TRSITTLVLL (83 aa). 2 helical membrane passes run 133-153 and 187-207; these read LTVVAAGLSKWLDIYSGVLMV and IIPPVFDTLDVSPLLAFAVLG.

Belongs to the YggT family.

The protein resides in the plastid. The protein localises to the chloroplast thylakoid membrane. Not required for the biogenesis and accumulation of native cytochrome b6 in the thylakoid membrane. Not functionally involved in the pathway for covalent binding of the c-type heme to cytochrome b6. The polypeptide is YlmG homolog protein 1-2, chloroplastic (Arabidopsis thaliana (Mouse-ear cress)).